Here is a 23-residue protein sequence, read N- to C-terminus: Phallacidin proprotein (23 aa).

A propeptide is located at residue proline 1. The segment at residues 2-8 is a cross-link (cyclopeptide (Ala-Pro)); sequence AWLVDCP. A cross-link (2'-cysteinyl-6'-hydroxytryptophan sulfoxide (Trp-Cys)) is located at residues 3–7; it reads WLVDC. A propeptide spanning residues 9 to 23 is cleaved from the precursor; sequence CVGDDVNRLLARGEK.

This sequence belongs to the MSDIN fungal toxin family. Post-translationally, processed by the macrocyclase-peptidase enzyme POPB to yield a toxic cyclic heptapeptide. POPB first removes 10 residues from the N-terminus. Conformational trapping of the remaining peptide forces the enzyme to release this intermediate rather than proceed to macrocyclization. The enzyme rebinds the remaining peptide in a different conformation and catalyzes macrocyclization of the N-terminal 7 residues.

Functionally, major toxin that belongs to the bicyclic heptapeptides called phallotoxins. Although structurally related to amatoxins, phallotoxins have a different mode of action, which is the stabilization of F-actin. Phallotoxins are poisonous when administered parenterally, but not orally because of poor absorption. The polypeptide is Phallacidin proprotein (Amanita fuliginea (East Asian brown death cap)).